Reading from the N-terminus, the 320-residue chain is MRSAQVYRWQIPMDAGVVLRDRRLKTRDGLYVRLCDGEREGWGEISPLPGFSQETLEEAQAALLDWVNGWLQGQSTLPEVPSVAFGVSCALAEAAGTLPEAADYRAAPLCTGDPDDLVLQLADMPGEKVAKIKVGLYEAVRDGMVVNLLLEAVPDLHLRLDANRAWTPLKAQQFAKYVNPDYRARIAFLEEPCKTRDDSRAFARETGIAIAWDESLREDDFVFAAEAGVSAVVIKPTLTGSLEKVREQVQAAHTLGLTAVISSSIESSLGLTQLARIAAWLTPQTIPGLDTLSLMQTQQVRRWPGSALPCVSDDALERLL.

K133 functions as the Proton donor in the catalytic mechanism. The Mg(2+) site is built by D161, E190, and D213. K235 acts as the Proton acceptor in catalysis.

This sequence belongs to the mandelate racemase/muconate lactonizing enzyme family. MenC type 1 subfamily. A divalent metal cation is required as a cofactor.

The enzyme catalyses (1R,6R)-6-hydroxy-2-succinyl-cyclohexa-2,4-diene-1-carboxylate = 2-succinylbenzoate + H2O. It functions in the pathway quinol/quinone metabolism; 1,4-dihydroxy-2-naphthoate biosynthesis; 1,4-dihydroxy-2-naphthoate from chorismate: step 4/7. It participates in quinol/quinone metabolism; menaquinone biosynthesis. Functionally, converts 2-succinyl-6-hydroxy-2,4-cyclohexadiene-1-carboxylate (SHCHC) to 2-succinylbenzoate (OSB). The protein is o-succinylbenzoate synthase of Citrobacter koseri (strain ATCC BAA-895 / CDC 4225-83 / SGSC4696).